The chain runs to 93 residues: Acylphosphatase (93 aa).

The Acylphosphatase-like domain occupies 7–93; it reads RLTAWVHGWV…TEQITGFSER (87 aa). Residues Arg-22 and Asn-40 contribute to the active site.

This sequence belongs to the acylphosphatase family.

The enzyme catalyses an acyl phosphate + H2O = a carboxylate + phosphate + H(+). The sequence is that of Acylphosphatase (acyP) from Mycobacterium tuberculosis (strain ATCC 25177 / H37Ra).